The sequence spans 728 residues: E3 ubiquitin-protein ligase LNX (728 aa).

Residues 45–83 (CHICLQALLDPLDTPCGHTYCTLCLTNFLVEKDFCPVDR) form an RING-type zinc finger. Residues 185-188 (NPAY) carry the NPXY motif motif. The disordered stretch occupies residues 185-220 (NPAYVSSVEDGEPVANSSDSGRSNRTRARPFERSTM). The tract at residues 186 to 244 (PAYVSSVEDGEPVANSSDSGRSNRTRARPFERSTMRSRSFKKINRALSALRRTKSGSVV) is interaction with MAGEB18. PDZ domains follow at residues 278-362 (SIKI…VLRE) and 385-467 (HVIL…VSRQ). At Ser-445 the chain carries Phosphoserine. Positions 481–500 (WISNGQQSPGPGERNTASKP) are disordered. PDZ domains follow at residues 508 to 593 (VVSV…ALEV) and 638 to 723 (DVIL…IASW).

In terms of assembly, interacts with CXADR. Interacts with MAGEB18 and MAGEF1. Interacts with the phosphotyrosine interaction domain of all isoforms of NUMB. IGSF5/JAM4 interacts with isoform 2 through the second PDZ domain, other isoforms may also interact with IGSF5/JAM4. In terms of tissue distribution, isoform 1 and isoform 2 are expressed in the heart. Isoform 1 is also expressed in kidney, lung and skeletal muscle while isoform 2 is also expressed in brain.

It is found in the cytoplasm. The enzyme catalyses S-ubiquitinyl-[E2 ubiquitin-conjugating enzyme]-L-cysteine + [acceptor protein]-L-lysine = [E2 ubiquitin-conjugating enzyme]-L-cysteine + N(6)-ubiquitinyl-[acceptor protein]-L-lysine.. Its pathway is protein modification; protein ubiquitination. Its function is as follows. E3 ubiquitin-protein ligase that mediates ubiquitination and subsequent proteasomal degradation of NUMB. E3 ubiquitin ligases accept ubiquitin from an E2 ubiquitin-conjugating enzyme in the form of a thioester and then directly transfers the ubiquitin to targeted substrates. Mediates ubiquitination of isoform p66 and isoform p72 of NUMB, but not that of isoform p71 or isoform p65. Functionally, isoform 2 provides an endocytic scaffold for IGSF5/JAM4. The sequence is that of E3 ubiquitin-protein ligase LNX (Lnx1) from Mus musculus (Mouse).